The sequence spans 279 residues: MPSLQKTKNRIALIDNIKKITKAMELVATSKMKKTQKHFLEVNEFSQSVLDIFSKIVSQIDPQIKLYPDGQKNSTLYIVISSDIGLAGSYNSNIFKILNSNIKNEDKLILIGQKAINFFSNRQDQIIETFKALPDYVTYKIAKLISDSALNSFLNKDVNQIKVVYTKFINLINQQEKISTILPIKKNPMKSEIKENAILEFEPDVESVFHKAIPLYLASIIFGFLTESKVSELAARRTAMESASKNAIDLIGNLKIEYNQTRQAKITQEISEIVAGSVE.

It belongs to the ATPase gamma chain family. F-type ATPases have 2 components, CF(1) - the catalytic core - and CF(0) - the membrane proton channel. CF(1) has five subunits: alpha(3), beta(3), gamma(1), delta(1), epsilon(1). CF(0) has three main subunits: a, b and c.

It is found in the cell membrane. Its function is as follows. Produces ATP from ADP in the presence of a proton gradient across the membrane. The gamma chain is believed to be important in regulating ATPase activity and the flow of protons through the CF(0) complex. This chain is ATP synthase gamma chain, found in Mycoplasmopsis pulmonis (strain UAB CTIP) (Mycoplasma pulmonis).